Consider the following 190-residue polypeptide: Lipid A 1-phosphatase (190 aa).

5 helical membrane passes run 22 to 42 (LLALSLGLILLGIFAPFPKVP), 60 to 80 (FIPTILSVAIPLIQRDAVGLF), 117 to 137 (GNFNMPSGHSSMVGLAVAFLM), 145 to 162 (YFWLLPLVPLTMLARIYL), and 164 to 184 (MHTIGAVLTGLGVGMLCVSLF).

The protein belongs to the lipid A LpxE 1-phosphatase family. It depends on Does not require divalent cations. as a cofactor.

The protein resides in the cell inner membrane. Its pathway is bacterial outer membrane biogenesis; LPS lipid A biosynthesis. Removes the 1-phosphate group from tetra- and probably hexaacylated lipid A species, has no requirement for the Kdo moiety of lipid A. Has no 4'-phosphatase activity. Has no activity on phospholipids (phosphatidylglycerol, phosphatidylethanolamine or cardiolipin). This enzyme has to act before EptA can attach phosphoethanolamine to the 1-position of lipid A. Absence of the 1-phosphate group renders the bacteria partially resistant to host-derived cationic antimicrobial peptides (CAMP), allowing it to camouflage itself from the host innate immune response, and plays a role in the long-term colonization of the host's stomach. The sequence is that of Lipid A 1-phosphatase from Helicobacter pylori (strain ATCC 700392 / 26695) (Campylobacter pylori).